A 297-amino-acid chain; its full sequence is Protoheme IX farnesyltransferase 1 (297 aa).

Helical transmembrane passes span 23-43, 45-65, 93-113, 117-137, 145-165, 171-191, 216-236, 241-261, and 277-297; these read VVVL…RAGV, WSVL…AAAV, LPAL…LLMF, LTAW…TGFL, IVIG…AVSG, PLLL…ALAI, LHIL…YAIH, LYLV…WVLY, and IGYL…LLNL.

This sequence belongs to the UbiA prenyltransferase family. Protoheme IX farnesyltransferase subfamily.

It localises to the cell inner membrane. The catalysed reaction is heme b + (2E,6E)-farnesyl diphosphate + H2O = Fe(II)-heme o + diphosphate. It participates in porphyrin-containing compound metabolism; heme O biosynthesis; heme O from protoheme: step 1/1. In terms of biological role, converts heme B (protoheme IX) to heme O by substitution of the vinyl group on carbon 2 of heme B porphyrin ring with a hydroxyethyl farnesyl side group. This Pseudomonas putida (strain W619) protein is Protoheme IX farnesyltransferase 1.